A 108-amino-acid polypeptide reads, in one-letter code: Sperm-egg fusion protein LLCFC1 (108 aa).

An N-terminal signal peptide occupies residues 1-30 (MTSLGSQLHRATFLTALLLLLLLQVKGVKT). The span at 39–49 (GDKSQKDKVSS) shows a compositional bias: basic and acidic residues. The disordered stretch occupies residues 39–64 (GDKSQKDKVSSEDQGEEEYEEHFEAS).

Detected in testicular germ cells and spermatozoa (at protein level). Abundantly expressed in testis.

It localises to the secreted. Functionally, sperm protein required for fusion of sperm with the egg membrane during fertilization. This Mus musculus (Mouse) protein is Sperm-egg fusion protein LLCFC1.